The sequence spans 216 residues: Uracil phosphoribosyltransferase (216 aa).

5-phospho-alpha-D-ribose 1-diphosphate-binding positions include R85, R110, and 135–143; that span reads DPMVATGYS. Uracil-binding positions include I200 and 205–207; that span reads GDA. D206 contributes to the 5-phospho-alpha-D-ribose 1-diphosphate binding site.

It belongs to the UPRTase family. It depends on Mg(2+) as a cofactor.

It carries out the reaction UMP + diphosphate = 5-phospho-alpha-D-ribose 1-diphosphate + uracil. The protein operates within pyrimidine metabolism; UMP biosynthesis via salvage pathway; UMP from uracil: step 1/1. Its activity is regulated as follows. Allosterically activated by GTP. In terms of biological role, catalyzes the conversion of uracil and 5-phospho-alpha-D-ribose 1-diphosphate (PRPP) to UMP and diphosphate. This Burkholderia thailandensis (strain ATCC 700388 / DSM 13276 / CCUG 48851 / CIP 106301 / E264) protein is Uracil phosphoribosyltransferase.